The chain runs to 195 residues: L-rhamnose-binding lectin CSL3 (195 aa).

SUEL-type lectin domains follow at residues 1–95 (AISI…YSCV) and 105–195 (ICEG…YTCD).

Its function is as follows. L-rhamnose binding lectin. Has hemagglutinating activity towards rabbit erythrocytes, human type A erythrocytes, human type B erythrocytes, human type O erythrocytes and sheep erythrocytes. Hemagglutinating activity is inhibited by smooth-type lipopolysaccharide (LPS) from S.flexneri 1A, A.salmonicida and E.coli K12, but not by rough-type LPS from S.flexneri, E.coli K12 and E.coli EH100. Agglutinates E.coli K12 and B.subtilis. The sequence is that of L-rhamnose-binding lectin CSL3 from Oncorhynchus keta (Chum salmon).